Here is a 338-residue protein sequence, read N- to C-terminus: Ketol-acid reductoisomerase (NADP(+)) (338 aa).

The 181-residue stretch at 1–181 (MKVYYDKDAD…GGTKGGVIET (181 aa)) folds into the KARI N-terminal Rossmann domain. NADP(+) is bound by residues 24 to 27 (YGSQ), Arg-47, Ser-52, and 82 to 85 (DESQ). His-107 is an active-site residue. An NADP(+)-binding site is contributed by Gly-133. The region spanning 182 to 327 (NFREETETDL…AELRAMMPWI (146 aa)) is the KARI C-terminal knotted domain. Residues Asp-190, Glu-194, Glu-226, and Glu-230 each contribute to the Mg(2+) site. Position 251 (Ser-251) interacts with substrate.

The protein belongs to the ketol-acid reductoisomerase family. It depends on Mg(2+) as a cofactor.

The catalysed reaction is (2R)-2,3-dihydroxy-3-methylbutanoate + NADP(+) = (2S)-2-acetolactate + NADPH + H(+). It catalyses the reaction (2R,3R)-2,3-dihydroxy-3-methylpentanoate + NADP(+) = (S)-2-ethyl-2-hydroxy-3-oxobutanoate + NADPH + H(+). It participates in amino-acid biosynthesis; L-isoleucine biosynthesis; L-isoleucine from 2-oxobutanoate: step 2/4. Its pathway is amino-acid biosynthesis; L-valine biosynthesis; L-valine from pyruvate: step 2/4. In terms of biological role, involved in the biosynthesis of branched-chain amino acids (BCAA). Catalyzes an alkyl-migration followed by a ketol-acid reduction of (S)-2-acetolactate (S2AL) to yield (R)-2,3-dihydroxy-isovalerate. In the isomerase reaction, S2AL is rearranged via a Mg-dependent methyl migration to produce 3-hydroxy-3-methyl-2-ketobutyrate (HMKB). In the reductase reaction, this 2-ketoacid undergoes a metal-dependent reduction by NADPH to yield (R)-2,3-dihydroxy-isovalerate. This chain is Ketol-acid reductoisomerase (NADP(+)), found in Chromobacterium violaceum (strain ATCC 12472 / DSM 30191 / JCM 1249 / CCUG 213 / NBRC 12614 / NCIMB 9131 / NCTC 9757 / MK).